The sequence spans 70 residues: Omega-conotoxin-like Bu1 (70 aa).

A signal peptide spans 1-22 (MKLTCVAIVAVLLLTACQLITA). The propeptide occupies 23–45 (EDSRGTQLHRALRKTTKLSVSTR). Cystine bridges form between cysteine 46–cysteine 61, cysteine 53–cysteine 65, and cysteine 60–cysteine 70.

It belongs to the conotoxin O1 superfamily. In terms of tissue distribution, expressed by the venom duct.

Its subcellular location is the secreted. Omega-conotoxins act at presynaptic membranes, they bind and block voltage-gated calcium channels (Cav). The polypeptide is Omega-conotoxin-like Bu1 (Conus bullatus (Bubble cone)).